Consider the following 59-residue polypeptide: Large ribosomal subunit protein uL30 (59 aa).

It belongs to the universal ribosomal protein uL30 family. As to quaternary structure, part of the 50S ribosomal subunit.

This is Large ribosomal subunit protein uL30 from Staphylococcus saprophyticus subsp. saprophyticus (strain ATCC 15305 / DSM 20229 / NCIMB 8711 / NCTC 7292 / S-41).